A 216-amino-acid chain; its full sequence is Putative F-box protein At2g03610 (216 aa).

Residues 19-69 (NQDWSKLCPDLLRPILESLSSIDFHRAKTVCSDWYSVWKTCKGYDSKWNQN) form the F-box domain.

The chain is Putative F-box protein At2g03610 from Arabidopsis thaliana (Mouse-ear cress).